Reading from the N-terminus, the 382-residue chain is MSLIIFTSAQRLRSVCRLQRIHGHMMSSKAGSEVLFEKVGKAGVITLNRPKALNALTLNMIRHIYPQLKKWDKDSETDIVIIKGAGEKAFCAGGDIRAIAEAGKAGNLLSQVFFREEYILNNTIGTYQKPYVALINGITMGGGVGLSVHGQFRVATEKTLFAMPETGIGLFPDVGGGYFLPRLQGKLGLFLALTGFRLKGRDVQRVGVATHFVQSEKIESLEKDLVDLKSPSISDVAQLLDSYQEQSHLDAEKPFVLQEQTEAIDRLFSAGSVEEIVENLKKDGSAFALKQAETLAKMSPTSLKLTFRQIEEGARMSLQEVFMMEYRLSQACMNGHDFYEGVRAVLIDKDQSPKWKPSTLAGVSEQFVDKCFSSLDERDLKL.

Positions 117, 142, 165, and 173 each coordinate substrate.

The protein belongs to the enoyl-CoA hydratase/isomerase family.

It localises to the mitochondrion. It catalyses the reaction 3-hydroxy-2-methylpropanoyl-CoA + H2O = 3-hydroxy-2-methylpropanoate + CoA + H(+). Its pathway is amino-acid degradation; L-valine degradation. Hydrolyzes 3-hydroxyisobutyryl-CoA (HIBYL-CoA), a saline catabolite. Has high activity toward isobutyryl-CoA. Could be an isobutyryl-CoA dehydrogenase that functions in valine catabolism. Also hydrolyzes 3-hydroxypropanoyl-CoA. The sequence is that of 3-hydroxyisobutyryl-CoA hydrolase, mitochondrial (hibch) from Danio rerio (Zebrafish).